We begin with the raw amino-acid sequence, 212 residues long: Pyridoxine/pyridoxamine 5'-phosphate oxidase (212 aa).

Substrate is bound by residues 8-11 (RRNY) and Lys-66. FMN-binding positions include 61–66 (RIVLLK), 76–77 (FT), Arg-82, Lys-83, and Gln-105. Substrate is bound by residues Tyr-123, Arg-127, and Ser-131. Residues 140 to 141 (QS) and Trp-184 contribute to the FMN site. 190-192 (RLH) lines the substrate pocket. Arg-194 contacts FMN.

The protein belongs to the pyridoxamine 5'-phosphate oxidase family. As to quaternary structure, homodimer. Requires FMN as cofactor.

The enzyme catalyses pyridoxamine 5'-phosphate + O2 + H2O = pyridoxal 5'-phosphate + H2O2 + NH4(+). The catalysed reaction is pyridoxine 5'-phosphate + O2 = pyridoxal 5'-phosphate + H2O2. It functions in the pathway cofactor metabolism; pyridoxal 5'-phosphate salvage; pyridoxal 5'-phosphate from pyridoxamine 5'-phosphate: step 1/1. It participates in cofactor metabolism; pyridoxal 5'-phosphate salvage; pyridoxal 5'-phosphate from pyridoxine 5'-phosphate: step 1/1. Catalyzes the oxidation of either pyridoxine 5'-phosphate (PNP) or pyridoxamine 5'-phosphate (PMP) into pyridoxal 5'-phosphate (PLP). This is Pyridoxine/pyridoxamine 5'-phosphate oxidase from Cupriavidus metallidurans (strain ATCC 43123 / DSM 2839 / NBRC 102507 / CH34) (Ralstonia metallidurans).